A 430-amino-acid polypeptide reads, in one-letter code: MLDSNLLRNEPDAVAEKLARRGFKLDVDKLRALEERRKVLQVNTENLQAERNSRSKSIGQAKARGEDIEPLRLEVNKLGEELDAAKAELDTLLAEIRDIALTIPNLPADEVPVGKDENDNVEVSRWGTPREFDFEIRDHVTLGEMHSGLDFAAAVKLTGSRFVVMKGQIARMHRALSQFMLDLHTEQHGYSENYVPYLVNHDTLYGTGQLPKFAGDLFHTRPLEEEADSSNYALIPTAEVPLTNLVRDEIIDEDQLPIKMTAHTPCFRSEAGSYGRDTRGLIRMHQFDKVEMVQIVRPEDSMAALEEMTGHAEKVLQLLGLPYRKIILCTGDMGFGACKTYDLEVWVPAQNTYREISSCSNVWDFQARRMQARCRSKSDKKTRLVHTLNGSGLAVGRTLVAVMENYQQADGRIEVPEVLRPYMNGLEYIG.

237–239 (TAE) lines the L-serine pocket. 268–270 (RSE) is an ATP binding site. E291 contributes to the L-serine binding site. 355–358 (EISS) provides a ligand contact to ATP. S391 is a binding site for L-serine.

It belongs to the class-II aminoacyl-tRNA synthetase family. Type-1 seryl-tRNA synthetase subfamily. As to quaternary structure, homodimer. The tRNA molecule binds across the dimer.

Its subcellular location is the cytoplasm. The catalysed reaction is tRNA(Ser) + L-serine + ATP = L-seryl-tRNA(Ser) + AMP + diphosphate + H(+). The enzyme catalyses tRNA(Sec) + L-serine + ATP = L-seryl-tRNA(Sec) + AMP + diphosphate + H(+). It participates in aminoacyl-tRNA biosynthesis; selenocysteinyl-tRNA(Sec) biosynthesis; L-seryl-tRNA(Sec) from L-serine and tRNA(Sec): step 1/1. Functionally, catalyzes the attachment of serine to tRNA(Ser). Is also able to aminoacylate tRNA(Sec) with serine, to form the misacylated tRNA L-seryl-tRNA(Sec), which will be further converted into selenocysteinyl-tRNA(Sec). This chain is Serine--tRNA ligase, found in Salmonella paratyphi C (strain RKS4594).